We begin with the raw amino-acid sequence, 166 residues long: Endoribonuclease YbeY (166 aa).

3 residues coordinate Zn(2+): His129, His133, and His139.

It belongs to the endoribonuclease YbeY family. Requires Zn(2+) as cofactor.

It is found in the cytoplasm. Single strand-specific metallo-endoribonuclease involved in late-stage 70S ribosome quality control and in maturation of the 3' terminus of the 16S rRNA. The protein is Endoribonuclease YbeY of Mesorhizobium japonicum (strain LMG 29417 / CECT 9101 / MAFF 303099) (Mesorhizobium loti (strain MAFF 303099)).